Consider the following 181-residue polypeptide: Achaete-scute homolog 3 (181 aa).

The basic motif stretch occupies residues 93 to 106 (AFTRKRNERERQRV). The 53-residue stretch at 93 to 145 (AFTRKRNERERQRVKCVNEGYAQLRHHLPEEYLEKRLSKVETLRAAIKYINYL) folds into the bHLH domain. The interval 107–145 (KCVNEGYAQLRHHLPEEYLEKRLSKVETLRAAIKYINYL) is helix-loop-helix motif.

Efficient DNA binding requires dimerization with another bHLH protein. In terms of tissue distribution, widely expressed in fetal and adult tissues.

It localises to the nucleus. Functionally, transcriptional repressor. Inhibits myogenesis. Plays a role in progenitor cells which differentiate into ductal and acinar, but not myoepithelial, cell lineages in the salivary glands. Involved in the functions of the microvillar cells and Bowman's glands and probably, in a non-cell-autonomous manner, in the development or regeneration of a complete olfactory epithelium (OE). This is Achaete-scute homolog 3 from Homo sapiens (Human).